The chain runs to 450 residues: 3-phosphoshikimate 1-carboxyvinyltransferase (450 aa).

Positions 1–26 are disordered; that stretch reads MSGHGTPIPMTSRRASPLKGEAHVPG. 3 residues coordinate 3-phosphoshikimate: Lys-28, Ser-29, and Arg-33. Lys-28 is a binding site for phosphoenolpyruvate. Gly-101 and Arg-129 together coordinate phosphoenolpyruvate. 4 residues coordinate 3-phosphoshikimate: Ser-174, Gln-176, Asp-327, and Lys-354. Position 176 (Gln-176) interacts with phosphoenolpyruvate. Asp-327 (proton acceptor) is an active-site residue. Residues Arg-358 and Arg-403 each coordinate phosphoenolpyruvate.

This sequence belongs to the EPSP synthase family. Monomer.

It localises to the cytoplasm. The enzyme catalyses 3-phosphoshikimate + phosphoenolpyruvate = 5-O-(1-carboxyvinyl)-3-phosphoshikimate + phosphate. It participates in metabolic intermediate biosynthesis; chorismate biosynthesis; chorismate from D-erythrose 4-phosphate and phosphoenolpyruvate: step 6/7. Functionally, catalyzes the transfer of the enolpyruvyl moiety of phosphoenolpyruvate (PEP) to the 5-hydroxyl of shikimate-3-phosphate (S3P) to produce enolpyruvyl shikimate-3-phosphate and inorganic phosphate. In Ruegeria sp. (strain TM1040) (Silicibacter sp.), this protein is 3-phosphoshikimate 1-carboxyvinyltransferase.